The sequence spans 604 residues: Ectonucleoside triphosphate diphosphohydrolase 7 (604 aa).

The Cytoplasmic portion of the chain corresponds to 1–28 (MARISFSYLCPASWYFTVPTVSPFLRQR). The chain crosses the membrane as a helical span at residues 29–49 (VAFLGLFFISCLLLLMLIIDF). Topologically, residues 50–546 (RHWSASLPRD…QAHGSWFRLS (497 aa)) are vesicular. Residue Glu217 is the Proton acceptor of the active site. N-linked (GlcNAc...) asparagine glycosylation occurs at Asn330. Residues Cys448 and Cys477 are joined by a disulfide bond. The helical transmembrane segment at 547 to 567 (FVYNHYLFFACILVVLLAIVL) threads the bilayer. The Cytoplasmic portion of the chain corresponds to 568–604 (YLLRLRRIHHRQTRASAPLDLLWLEEVVPMMGVQVGP).

The protein belongs to the GDA1/CD39 NTPase family. It depends on Ca(2+) as a cofactor. Requires Mg(2+) as cofactor.

The protein resides in the cytoplasmic vesicle membrane. The catalysed reaction is a ribonucleoside 5'-triphosphate + H2O = a ribonucleoside 5'-diphosphate + phosphate + H(+). It carries out the reaction UTP + H2O = UDP + phosphate + H(+). It catalyses the reaction GTP + H2O = GDP + phosphate + H(+). The enzyme catalyses CTP + H2O = CDP + phosphate + H(+). In terms of biological role, catalyzes the hydrolysis of nucleoside triphosphates and diphosphates in a calcium- or magnesium-dependent manner. Preferentially hydrolyzes nucleoside 5'-triphosphates, with substrate preference for UTP &gt; GTP &gt; CTP. Hydrolyzes ATP and nucleoside diphosphates only to a minor extent. This Pongo abelii (Sumatran orangutan) protein is Ectonucleoside triphosphate diphosphohydrolase 7 (ENTPD7).